A 311-amino-acid chain; its full sequence is Methionyl-tRNA formyltransferase (311 aa).

112 to 115 contacts (6S)-5,6,7,8-tetrahydrofolate; that stretch reads SLLP.

This sequence belongs to the Fmt family.

The enzyme catalyses L-methionyl-tRNA(fMet) + (6R)-10-formyltetrahydrofolate = N-formyl-L-methionyl-tRNA(fMet) + (6S)-5,6,7,8-tetrahydrofolate + H(+). Attaches a formyl group to the free amino group of methionyl-tRNA(fMet). The formyl group appears to play a dual role in the initiator identity of N-formylmethionyl-tRNA by promoting its recognition by IF2 and preventing the misappropriation of this tRNA by the elongation apparatus. The polypeptide is Methionyl-tRNA formyltransferase (Bradyrhizobium sp. (strain BTAi1 / ATCC BAA-1182)).